A 1368-amino-acid polypeptide reads, in one-letter code: DNA-directed RNA polymerase subunit beta (1368 aa).

It belongs to the RNA polymerase beta chain family. In terms of assembly, the RNAP catalytic core consists of 2 alpha, 1 beta, 1 beta' and 1 omega subunit. When a sigma factor is associated with the core the holoenzyme is formed, which can initiate transcription.

It catalyses the reaction RNA(n) + a ribonucleoside 5'-triphosphate = RNA(n+1) + diphosphate. DNA-dependent RNA polymerase catalyzes the transcription of DNA into RNA using the four ribonucleoside triphosphates as substrates. In Burkholderia ambifaria (strain MC40-6), this protein is DNA-directed RNA polymerase subunit beta.